The primary structure comprises 134 residues: Small ribosomal subunit protein uS9c (134 aa).

Belongs to the universal ribosomal protein uS9 family.

The protein resides in the plastid. Its subcellular location is the chloroplast. In Thalassiosira pseudonana (Marine diatom), this protein is Small ribosomal subunit protein uS9c (rps9).